A 396-amino-acid chain; its full sequence is Ornithine aminotransferase (396 aa).

The residue at position 255 (Lys255) is an N6-(pyridoxal phosphate)lysine.

The protein belongs to the class-III pyridoxal-phosphate-dependent aminotransferase family. OAT subfamily. Requires pyridoxal 5'-phosphate as cofactor.

The protein localises to the cytoplasm. It carries out the reaction a 2-oxocarboxylate + L-ornithine = L-glutamate 5-semialdehyde + an L-alpha-amino acid. It participates in amino-acid biosynthesis; L-proline biosynthesis; L-glutamate 5-semialdehyde from L-ornithine: step 1/1. Functionally, catalyzes the interconversion of ornithine to glutamate semialdehyde. This chain is Ornithine aminotransferase, found in Bacillus anthracis (strain A0248).